The following is a 470-amino-acid chain: Probable citrate synthase, mitochondrial (470 aa).

Residues histidine 297, histidine 351, and aspartate 406 contribute to the active site.

The protein belongs to the citrate synthase family. Homodimer.

The protein resides in the mitochondrion matrix. It carries out the reaction oxaloacetate + acetyl-CoA + H2O = citrate + CoA + H(+). It participates in carbohydrate metabolism; tricarboxylic acid cycle; isocitrate from oxaloacetate: step 1/2. The polypeptide is Probable citrate synthase, mitochondrial (Leishmania infantum).